The primary structure comprises 334 residues: MARDEVRRILPADIKREVLIKDEKAETNPKWGFPPEKRPMEMHMQFGIINLDKPPGPTSHEVVAWVKKLFNLNKAGHGGTLDPKVSGVLPVALERATRVVQALLPAGKEYVALMHLHGEVPEDKIYAVMKEFEGEIIQRPPLRSAVKRRLRTRKVYYIEILEIDGKDVLFRVGVEAGTYIRSLIHHIGLALGVGAHMAELRRTRSGPFKEDETLVTLHDLVDYYHFWKEDGIEEYFRKAIQPMEKAVEHLPKVWIRDSAVAAVTHGADLAVPGIVKVHKGIKKGDLVAVMTLKDELVALGKATMTSGEMLQKSKGIAVDVDKVFMPRDWYPKLW.

Aspartate 82 (nucleophile) is an active-site residue. The PUA domain occupies 250-325; sequence LPKVWIRDSA…IAVDVDKVFM (76 aa).

It belongs to the pseudouridine synthase TruB family. Type 2 subfamily.

The catalysed reaction is uridine(55) in tRNA = pseudouridine(55) in tRNA. In terms of biological role, could be responsible for synthesis of pseudouridine from uracil-55 in the psi GC loop of transfer RNAs. This Thermococcus onnurineus (strain NA1) protein is Probable tRNA pseudouridine synthase B.